The primary structure comprises 209 residues: Uracil phosphoribosyltransferase (209 aa).

5-phospho-alpha-D-ribose 1-diphosphate is bound by residues Arg79, Arg104, and 131-139 (DPMLATGGS). Residues Ile194 and 199-201 (GDA) contribute to the uracil site. Asp200 provides a ligand contact to 5-phospho-alpha-D-ribose 1-diphosphate.

Belongs to the UPRTase family. Requires Mg(2+) as cofactor.

It catalyses the reaction UMP + diphosphate = 5-phospho-alpha-D-ribose 1-diphosphate + uracil. The protein operates within pyrimidine metabolism; UMP biosynthesis via salvage pathway; UMP from uracil: step 1/1. Its activity is regulated as follows. Allosterically activated by GTP. In terms of biological role, catalyzes the conversion of uracil and 5-phospho-alpha-D-ribose 1-diphosphate (PRPP) to UMP and diphosphate. The sequence is that of Uracil phosphoribosyltransferase from Alkaliphilus oremlandii (strain OhILAs) (Clostridium oremlandii (strain OhILAs)).